The chain runs to 270 residues: Small ribosomal subunit protein uS2 (270 aa).

It belongs to the universal ribosomal protein uS2 family. As to quaternary structure, component of the small ribosomal subunit. Mature ribosomes consist of a small (40S) and a large (60S) subunit. The 40S subunit contains about 33 different proteins and 1 molecule of RNA (18S). The 60S subunit contains about 49 different proteins and 3 molecules of RNA (28S, 5.8S and 5S). Interacts with oho23B/rpS21.

Its subcellular location is the cytoplasm. It is found in the nucleus. Required for the assembly and/or stability of the 40S ribosomal subunit. Required for the processing of the 20S rRNA-precursor to mature 18S rRNA in a late step of the maturation of 40S ribosomal subunits. Required during oogenesis and imaginal development. This Drosophila persimilis (Fruit fly) protein is Small ribosomal subunit protein uS2.